The chain runs to 445 residues: Cytoplasmic tRNA 2-thiolation protein 2 (445 aa).

The span at M1 to D11 shows a compositional bias: acidic residues. The tract at residues M1 to E26 is disordered. Residues G13–S22 are compositionally biased toward basic and acidic residues.

This sequence belongs to the CTU2/NCS2 family.

The protein resides in the cytoplasm. Its pathway is tRNA modification; 5-methoxycarbonylmethyl-2-thiouridine-tRNA biosynthesis. In terms of biological role, plays a central role in 2-thiolation of mcm(5)S(2)U at tRNA wobble positions of tRNA(Lys), tRNA(Glu) and tRNA(Gln). May act by forming a heterodimer with NCS6/CTU1 that ligates sulfur from thiocarboxylated URM1 onto the uridine of tRNAs at wobble position. This is Cytoplasmic tRNA 2-thiolation protein 2 from Aedes aegypti (Yellowfever mosquito).